The sequence spans 200 residues: Blue fluorescence protein (200 aa).

Lumazine-binding repeat units lie at residues 1–111 (MFKG…TGGR) and 112–200 (SLSG…AGNW).

As to quaternary structure, monomer.

Its subcellular location is the cytoplasm. Its function is as follows. Blue fluorescence protein (BFP) that can bind 6,7-dimethyl-8-ribityllumazine, riboflavin, and 6-methyl-7-oxo-8-ribityllumazine as a bound fluorophore. Has no riboflavin-synthase activity. The polypeptide is Blue fluorescence protein (Aliivibrio fischeri (Vibrio fischeri)).